The sequence spans 476 residues: Adenosylhomocysteinase (476 aa).

3 residues coordinate substrate: Thr67, Asp142, and Glu202. Position 203-205 (203-205) interacts with NAD(+); that stretch reads TTT. Substrate contacts are provided by Lys232 and Asp236. NAD(+) contacts are provided by residues Asn237, 266–271, Glu289, Asn324, 345–347, and Asn390; these read GYGDVG and IGH.

Belongs to the adenosylhomocysteinase family. NAD(+) serves as cofactor.

It is found in the cytoplasm. The enzyme catalyses S-adenosyl-L-homocysteine + H2O = L-homocysteine + adenosine. Its pathway is amino-acid biosynthesis; L-homocysteine biosynthesis; L-homocysteine from S-adenosyl-L-homocysteine: step 1/1. Functionally, may play a key role in the regulation of the intracellular concentration of adenosylhomocysteine. This chain is Adenosylhomocysteinase, found in Prochlorococcus marinus (strain MIT 9211).